Consider the following 191-residue polypeptide: Potassium-transporting ATPase KdpC subunit (191 aa).

The chain crosses the membrane as a helical span at residues 13 to 35 (VLFTGLCGLAYPLAITGVAQAVL). The segment at 112–132 (SGPVPADAVTSSASGLDPDIS) is disordered.

It belongs to the KdpC family. The system is composed of three essential subunits: KdpA, KdpB and KdpC.

The protein localises to the cell inner membrane. In terms of biological role, part of the high-affinity ATP-driven potassium transport (or Kdp) system, which catalyzes the hydrolysis of ATP coupled with the electrogenic transport of potassium into the cytoplasm. This subunit acts as a catalytic chaperone that increases the ATP-binding affinity of the ATP-hydrolyzing subunit KdpB by the formation of a transient KdpB/KdpC/ATP ternary complex. This Allorhizobium ampelinum (strain ATCC BAA-846 / DSM 112012 / S4) (Agrobacterium vitis (strain S4)) protein is Potassium-transporting ATPase KdpC subunit.